A 264-amino-acid polypeptide reads, in one-letter code: MRAYLDLVQHVLEHGHRKEDRTGTGTLSVFGHQMRFDLEAGFPLVTTKRVFWRGVAEELLWFIRGSTNARELEDKGVRIWSPWADPDGELGPVYGAQWRSWRAADGREIDQLQQVLTELRQRPDSRRHLVSAWNVGELERMNLPPCHLLFQFYVAEGRLSCQLYQRSADLFLGVPFNIASYSLLTHLVARHVGLEVGEFIWTGGDCHLYLNHLAQAREQLSRAPRPLPTLHIDPGVTDLFAVRYEHLRLAGYDPHPKLTAPVAV.

Residues Arg-21 and 126–127 (RR) contribute to the dUMP site. The active-site Nucleophile is Cys-146. Residues 166 to 169 (RSAD), Asn-177, and 207 to 209 (HLY) contribute to the dUMP site. Asp-169 contacts (6R)-5,10-methylene-5,6,7,8-tetrahydrofolate. (6R)-5,10-methylene-5,6,7,8-tetrahydrofolate is bound at residue Ala-263.

The protein belongs to the thymidylate synthase family. Bacterial-type ThyA subfamily. Homodimer.

The protein resides in the cytoplasm. It catalyses the reaction dUMP + (6R)-5,10-methylene-5,6,7,8-tetrahydrofolate = 7,8-dihydrofolate + dTMP. The protein operates within pyrimidine metabolism; dTTP biosynthesis. Functionally, catalyzes the reductive methylation of 2'-deoxyuridine-5'-monophosphate (dUMP) to 2'-deoxythymidine-5'-monophosphate (dTMP) while utilizing 5,10-methylenetetrahydrofolate (mTHF) as the methyl donor and reductant in the reaction, yielding dihydrofolate (DHF) as a by-product. This enzymatic reaction provides an intracellular de novo source of dTMP, an essential precursor for DNA biosynthesis. This chain is Thymidylate synthase, found in Halorhodospira halophila (strain DSM 244 / SL1) (Ectothiorhodospira halophila (strain DSM 244 / SL1)).